Here is a 618-residue protein sequence, read N- to C-terminus: Dihydroxy-acid dehydratase (618 aa).

Aspartate 81 contacts Mg(2+). Cysteine 122 is a binding site for [2Fe-2S] cluster. 2 residues coordinate Mg(2+): aspartate 123 and lysine 124. Lysine 124 bears the N6-carboxylysine mark. A [2Fe-2S] cluster-binding site is contributed by cysteine 195. Position 491 (glutamate 491) interacts with Mg(2+). Serine 517 (proton acceptor) is an active-site residue.

Belongs to the IlvD/Edd family. As to quaternary structure, homodimer. [2Fe-2S] cluster serves as cofactor. Requires Mg(2+) as cofactor.

The enzyme catalyses (2R)-2,3-dihydroxy-3-methylbutanoate = 3-methyl-2-oxobutanoate + H2O. It carries out the reaction (2R,3R)-2,3-dihydroxy-3-methylpentanoate = (S)-3-methyl-2-oxopentanoate + H2O. The protein operates within amino-acid biosynthesis; L-isoleucine biosynthesis; L-isoleucine from 2-oxobutanoate: step 3/4. Its pathway is amino-acid biosynthesis; L-valine biosynthesis; L-valine from pyruvate: step 3/4. Functions in the biosynthesis of branched-chain amino acids. Catalyzes the dehydration of (2R,3R)-2,3-dihydroxy-3-methylpentanoate (2,3-dihydroxy-3-methylvalerate) into 2-oxo-3-methylpentanoate (2-oxo-3-methylvalerate) and of (2R)-2,3-dihydroxy-3-methylbutanoate (2,3-dihydroxyisovalerate) into 2-oxo-3-methylbutanoate (2-oxoisovalerate), the penultimate precursor to L-isoleucine and L-valine, respectively. In Rhodopseudomonas palustris (strain TIE-1), this protein is Dihydroxy-acid dehydratase.